The sequence spans 394 residues: RILP-like protein 1 (394 aa).

The 88-residue stretch at 2 to 89 folds into the RH1 domain; that stretch reads EGISALEKNV…RLERMDRIEK (88 aa). Positions 68-327 form a coiled coil; the sequence is EMEELRLELD…EAEEENKLPQ (260 aa). One can recognise an RH2 domain in the interval 282 to 347; it reads RPRFTLQELR…IPQESGIKRL (66 aa).

The protein belongs to the RILPL family.

The protein localises to the cytoplasm. The protein resides in the cytosol. It localises to the cytoskeleton. Its subcellular location is the microtubule organizing center. It is found in the centrosome. The protein localises to the cell projection. The protein resides in the cilium. Functionally, plays a role in the regulation of cell shape and polarity. Plays a role in cellular protein transport, including protein transport away from primary cilia. Neuroprotective protein. The protein is RILP-like protein 1 (rilpl1) of Xenopus laevis (African clawed frog).